A 305-amino-acid polypeptide reads, in one-letter code: Methionyl-tRNA formyltransferase (305 aa).

A (6S)-5,6,7,8-tetrahydrofolate-binding site is contributed by Ser-111–Pro-114.

Belongs to the Fmt family.

It carries out the reaction L-methionyl-tRNA(fMet) + (6R)-10-formyltetrahydrofolate = N-formyl-L-methionyl-tRNA(fMet) + (6S)-5,6,7,8-tetrahydrofolate + H(+). Functionally, attaches a formyl group to the free amino group of methionyl-tRNA(fMet). The formyl group appears to play a dual role in the initiator identity of N-formylmethionyl-tRNA by promoting its recognition by IF2 and preventing the misappropriation of this tRNA by the elongation apparatus. This Campylobacter jejuni subsp. jejuni serotype O:2 (strain ATCC 700819 / NCTC 11168) protein is Methionyl-tRNA formyltransferase.